We begin with the raw amino-acid sequence, 510 residues long: NAD(P)H-quinone oxidoreductase subunit 2, chloroplastic (510 aa).

12 helical membrane passes run 24-44 (LLLF…GLIL), 59-79 (WFYF…LFRW), 99-119 (IFQF…VEYI), 124-144 (MAIT…MFLC), 149-169 (LITI…LSGY), 183-203 (YLLM…WLYG), 229-249 (ISIA…PAPF), 295-315 (WHLL…LIAI), 323-343 (MLAY…IVGD), 347-367 (GYAS…GTFA), 395-415 (ALSS…AGFF), and 418-438 (LHLF…IGLL).

It belongs to the complex I subunit 2 family. In terms of assembly, NDH is composed of at least 16 different subunits, 5 of which are encoded in the nucleus.

It localises to the plastid. It is found in the chloroplast thylakoid membrane. The catalysed reaction is a plastoquinone + NADH + (n+1) H(+)(in) = a plastoquinol + NAD(+) + n H(+)(out). It carries out the reaction a plastoquinone + NADPH + (n+1) H(+)(in) = a plastoquinol + NADP(+) + n H(+)(out). In terms of biological role, NDH shuttles electrons from NAD(P)H:plastoquinone, via FMN and iron-sulfur (Fe-S) centers, to quinones in the photosynthetic chain and possibly in a chloroplast respiratory chain. The immediate electron acceptor for the enzyme in this species is believed to be plastoquinone. Couples the redox reaction to proton translocation, and thus conserves the redox energy in a proton gradient. This Allium textile (Textile onion) protein is NAD(P)H-quinone oxidoreductase subunit 2, chloroplastic.